The sequence spans 102 residues: Envelope glycoprotein N (102 aa).

Positions 1–32 (MGKVLRKPFAKAVPLLFLAATWLLTGVLPAGA) are cleaved as a signal peptide. Residues 33 to 69 (SSPTNAAAASLTEAQDQFYSYTCNADTFSPSLTSFAS) are Virion surface-facing. Residues 70-90 (IWALLTLVLVIIASAIYLMYV) traverse the membrane as a helical segment. Over 91–102 (CFNKFVNTLLTD) the chain is Intravirion.

Belongs to the herpesviridae glycoprotein N family. Interacts (via N-terminus) with gM (via N-terminus). The gM-gN heterodimer forms the gCII complex. Post-translationally, O-glycosylated. Contains alpha 2,6-sialic acid residues.

The protein resides in the virion membrane. It localises to the host membrane. The protein localises to the host Golgi apparatus. It is found in the host trans-Golgi network. Its function is as follows. Envelope glycoprotein necessary for proper maturation of gM and modulation of its membrane fusion activity. Also plays a critical role in virion morphogenesis. The sequence is that of Envelope glycoprotein N from Epstein-Barr virus (strain AG876) (HHV-4).